We begin with the raw amino-acid sequence, 302 residues long: m7GpppN-mRNA hydrolase NUDT17 (302 aa).

Positions 89-237 (GRGVDLGVAV…DGTETPKHLP (149 aa)) constitute a Nudix hydrolase domain. The short motif at 128 to 149 (GHVEPDEELLDGGLRELWEESG) is the Nudix box element. Mg(2+) is bound by residues E143 and E147.

It belongs to the Nudix hydrolase family. It depends on Mg(2+) as a cofactor. Requires Mn(2+) as cofactor.

It catalyses the reaction a 5'-end (N(7)-methyl 5'-triphosphoguanosine)-ribonucleoside in mRNA + H2O = N(7)-methyl-GDP + a 5'-end phospho-ribonucleoside in mRNA + 2 H(+). Its function is as follows. Acts as a decapping enzyme capable of hydrolyzing monomethylated capped RNAs (in vitro). Hydrolyzes monomethylated capped RNA after alpha and beta phosphates to form N(7)-methyl-GDP. Shows low activity towards unmethylated capped RNA. The protein is m7GpppN-mRNA hydrolase NUDT17 (NUDT17) of Bos taurus (Bovine).